The following is a 373-amino-acid chain: Flagellar P-ring protein (373 aa).

The signal sequence occupies residues 1–26 (MKLFFRFLTLVAVLAMSLADVAPAWA).

This sequence belongs to the FlgI family. The basal body constitutes a major portion of the flagellar organelle and consists of four rings (L,P,S, and M) mounted on a central rod.

Its subcellular location is the periplasm. It localises to the bacterial flagellum basal body. Functionally, assembles around the rod to form the L-ring and probably protects the motor/basal body from shearing forces during rotation. The sequence is that of Flagellar P-ring protein from Rhizobium leguminosarum bv. trifolii (strain WSM2304).